Here is a 392-residue protein sequence, read N- to C-terminus: Cyclic AMP receptor 1 (392 aa).

Residues 1–13 (MGLLDGNPANETS) are Extracellular-facing. Asn10 carries an N-linked (GlcNAc...) asparagine glycan. A helical membrane pass occupies residues 14 to 33 (LVLLLFADFSSMLGCMAVLI). Residues 34–47 (GFWRLKLLRNHVTK) lie on the Cytoplasmic side of the membrane. Residues 48-68 (VIACFCATSFCKDFPSTILTL) form a helical membrane-spanning segment. At 69–83 (TNTAVNGGFPCYLYA) the chain is on the extracellular side. Residues 84–109 (IVITYGSFACWLWTLCLAISIYMLIV) traverse the membrane as a helical segment. Residues 110–120 (KREPEPERFEK) lie on the Cytoplasmic side of the membrane. A helical transmembrane segment spans residues 121–139 (YYYLLCWGLPLISTIVMLA). The Extracellular portion of the chain corresponds to 140–162 (KNTVQFVGNWCWIGVSFTGYRFG). The chain crosses the membrane as a helical span at residues 163-181 (LFYGPFLFIWAISAVLVGL). The Cytoplasmic segment spans residues 182–205 (TSRYTYVVIHNGVSDNKEKHLTYQ). Residues 206–224 (FKLINYIIVFLVCWVFAVV) form a helical membrane-spanning segment. Residues 225-235 (NRIVNGLNMFP) lie on the Extracellular side of the membrane. Residues 236–260 (PALNILHTYLSVSHGFWASVTFIYN) traverse the membrane as a helical segment. Topologically, residues 261–392 (NPLMWRYFGA…STSTNGQGNN (132 aa)) are cytoplasmic. Disordered regions lie at residues 292–324 (NKNNNNPSPYSSSRGTSGKTMGGHPTGDDVQCS) and 339–392 (VNNQ…QGNN). The span at 298–310 (PSPYSSSRGTSGK) shows a compositional bias: polar residues. Residues Ser299, Ser302, Ser303, Ser304, Ser308, Ser360, Ser361, Ser362, Ser363, Ser364, Ser366, Ser367, and Ser368 each carry the phosphoserine modification. The span at 340–367 (NNQQNLNNNYGLQQNYNDEGSSSSSLSS) shows a compositional bias: low complexity. The segment covering 375 to 392 (VEMQNIQISTSTNGQGNN) has biased composition (polar residues).

Belongs to the G-protein coupled receptor 5 family. Post-translationally, C-terminal Ser or Thr residues may be phosphorylated.

The protein localises to the membrane. Receptor for cAMP. Coordinates the aggregation of individual cells into a multicellular organism and regulates the expression of a large number of developmentally regulated genes. The activity of this receptor is mediated by G proteins. This is Cyclic AMP receptor 1 (carA-1) from Dictyostelium discoideum (Social amoeba).